The following is a 242-amino-acid chain: Uridylate kinase (242 aa).

ATP is bound at residue 15–18; the sequence is KLSG. The tract at residues 23 to 28 is involved in allosteric activation by GTP; that stretch reads GDEGFG. G57 is a UMP binding site. ATP-binding residues include G58 and R62. UMP contacts are provided by residues D77 and 138–145; that span reads TGNPFCTT. 3 residues coordinate ATP: T165, Y171, and D174.

Belongs to the UMP kinase family. Homohexamer.

The protein resides in the cytoplasm. The catalysed reaction is UMP + ATP = UDP + ADP. The protein operates within pyrimidine metabolism; CTP biosynthesis via de novo pathway; UDP from UMP (UMPK route): step 1/1. With respect to regulation, allosterically activated by GTP. Inhibited by UTP. Its function is as follows. Catalyzes the reversible phosphorylation of UMP to UDP. This chain is Uridylate kinase, found in Shewanella sp. (strain ANA-3).